We begin with the raw amino-acid sequence, 154 residues long: MVKAVAVLRGDSKISGTVTFEQADANAPTTVSWNITGHDANAERAFHVHQFGDNTNGCTSAGPHFNPFGKEHGAPEDENRHVGDLGNFKTDAEGNAVGSKQDKLIKLIGAESVLGRTLVIHAGTDDLGRSEHPESKKTGNAGARPACGVIGIAA.

Cu cation is bound by residues His-47, His-49, and His-64. An intrachain disulfide couples Cys-58 to Cys-147. Residues His-64, His-72, His-81, and Asp-84 each contribute to the Zn(2+) site. His-121 contributes to the Cu cation binding site. Residues 125–137 show a composition bias toward basic and acidic residues; it reads DDLGRSEHPESKK. Positions 125–144 are disordered; the sequence is DDLGRSEHPESKKTGNAGAR. Arg-144 is a substrate binding site.

The protein belongs to the Cu-Zn superoxide dismutase family. As to quaternary structure, homodimer. Cu cation serves as cofactor. Zn(2+) is required as a cofactor.

It is found in the cytoplasm. The catalysed reaction is 2 superoxide + 2 H(+) = H2O2 + O2. Destroys radicals which are normally produced within the cells and which are toxic to biological systems. The sequence is that of Superoxide dismutase [Cu-Zn] (sodC) from Aspergillus oryzae (strain ATCC 42149 / RIB 40) (Yellow koji mold).